We begin with the raw amino-acid sequence, 61 residues long: Small ribosomal subunit protein uS14 (61 aa).

Zn(2+) is bound by residues Cys24, Cys27, Cys40, and Cys43.

Belongs to the universal ribosomal protein uS14 family. Zinc-binding uS14 subfamily. In terms of assembly, part of the 30S ribosomal subunit. Contacts proteins S3 and S10. It depends on Zn(2+) as a cofactor.

Its function is as follows. Binds 16S rRNA, required for the assembly of 30S particles and may also be responsible for determining the conformation of the 16S rRNA at the A site. The polypeptide is Small ribosomal subunit protein uS14 (Beutenbergia cavernae (strain ATCC BAA-8 / DSM 12333 / CCUG 43141 / JCM 11478 / NBRC 16432 / NCIMB 13614 / HKI 0122)).